The primary structure comprises 419 residues: G protein-activated inward rectifier potassium channel 4 (419 aa).

The Cytoplasmic segment spans residues Met1–Trp86. At Ser5 the chain carries Phosphoserine. A helical transmembrane segment spans residues Arg87–Ile111. At Ala112–Gly135 the chain is on the extracellular side. The segment at residues Phe136 to Glu147 is an intramembrane region (helical; Pore-forming). The segment at residues Thr148–Phe154 is an intramembrane region (pore-forming). A Selectivity filter motif is present at residues Thr149 to Phe154. At Arg155 to Glu163 the chain is on the extracellular side. The helical transmembrane segment at Gly164–Cys185 threads the bilayer. Residues Met186–Val419 lie on the Cytoplasmic side of the membrane. A disordered region spans residues Ala390 to Val419. Residues Leu394–Glu405 are compositionally biased toward acidic residues.

The protein belongs to the inward rectifier-type potassium channel (TC 1.A.2.1) family. KCNJ5 subfamily. As to quaternary structure, associates with KCNJ3/GIRK1 to form a G-protein-activated heteromultimer pore-forming unit. The resulting inward current is much larger. Associates with KCNJ6/GIRK2 to form a G-protein-activated heteromultimer pore-forming unit. As to expression, islets, exocrine pancreas and heart. Expressed in the adrenal cortex, particularly the zona glomerulosa.

The protein resides in the membrane. The enzyme catalyses K(+)(in) = K(+)(out). With respect to regulation, heteromultimer composed of KCNJ3/GIRK1 and KCNJ5/GIRK4 is activated by phosphatidylinositol 4,5 biphosphate (PtdIns(4,5)P2). Inward rectifier potassium channels are characterized by a greater tendency to allow potassium to flow into the cell rather than out of it. Their voltage dependence is regulated by the concentration of extracellular potassium; as external potassium is raised, the voltage range of the channel opening shifts to more positive voltages. The inward rectification is mainly due to the blockage of outward current by internal magnesium. Can be blocked by external barium. This potassium channel is controlled by G proteins. The sequence is that of G protein-activated inward rectifier potassium channel 4 (KCNJ5) from Homo sapiens (Human).